Reading from the N-terminus, the 305-residue chain is Sulfate adenylyltransferase subunit 2 (305 aa).

This sequence belongs to the PAPS reductase family. CysD subfamily. As to quaternary structure, heterodimer composed of CysD, the smaller subunit, and CysN.

It carries out the reaction sulfate + ATP + H(+) = adenosine 5'-phosphosulfate + diphosphate. The protein operates within sulfur metabolism; hydrogen sulfide biosynthesis; sulfite from sulfate: step 1/3. With CysN forms the ATP sulfurylase (ATPS) that catalyzes the adenylation of sulfate producing adenosine 5'-phosphosulfate (APS) and diphosphate, the first enzymatic step in sulfur assimilation pathway. APS synthesis involves the formation of a high-energy phosphoric-sulfuric acid anhydride bond driven by GTP hydrolysis by CysN coupled to ATP hydrolysis by CysD. The protein is Sulfate adenylyltransferase subunit 2 of Pseudomonas entomophila (strain L48).